Reading from the N-terminus, the 190-residue chain is Ribosome-recycling factor (190 aa).

It belongs to the RRF family.

The protein resides in the cytoplasm. In terms of biological role, responsible for the release of ribosomes from messenger RNA at the termination of protein biosynthesis. May increase the efficiency of translation by recycling ribosomes from one round of translation to another. This chain is Ribosome-recycling factor, found in Fusobacterium nucleatum subsp. nucleatum (strain ATCC 25586 / DSM 15643 / BCRC 10681 / CIP 101130 / JCM 8532 / KCTC 2640 / LMG 13131 / VPI 4355).